The chain runs to 110 residues: Insulin (110 aa).

A signal peptide spans 1-24 (MALWMRLLPLLALLALWGPDPVPA). 3 disulfide bridges follow: C31-C96, C43-C109, and C95-C100. The propeptide at 57–87 (EAEDPQVGQVELGGGPGAGSLQPLALEGSLQ) is c peptide.

Belongs to the insulin family. Heterodimer of a B chain and an A chain linked by two disulfide bonds.

The protein resides in the secreted. In terms of biological role, insulin decreases blood glucose concentration. It increases cell permeability to monosaccharides, amino acids and fatty acids. It accelerates glycolysis, the pentose phosphate cycle, and glycogen synthesis in liver. In Chlorocebus aethiops (Green monkey), this protein is Insulin (INS).